A 105-amino-acid polypeptide reads, in one-letter code: T cell receptor alpha variable 40 (105 aa).

The first 19 residues, 1-19 (MNSSLDFLILILMFGGTSS), serve as a signal peptide directing secretion. The Ig-like domain maps to 20–105 (NSVKQTGQIT…DSAVYYCLLG (86 aa)). N39 carries N-linked (GlcNAc...) asparagine glycosylation. A disulfide bridge connects residues C40 and C102.

Alpha-beta TR is a heterodimer composed of an alpha and beta chain; disulfide-linked. The alpha-beta TR is associated with the transmembrane signaling CD3 coreceptor proteins to form the TR-CD3 (TcR or TCR). The assembly of alpha-beta TR heterodimers with CD3 occurs in the endoplasmic reticulum where a single alpha-beta TR heterodimer associates with one CD3D-CD3E heterodimer, one CD3G-CD3E heterodimer and one CD247 homodimer forming a stable octameric structure. CD3D-CD3E and CD3G-CD3E heterodimers preferentially associate with TR alpha and TR beta chains, respectively. The association of the CD247 homodimer is the last step of TcR assembly in the endoplasmic reticulum and is required for transport to the cell surface.

The protein localises to the cell membrane. V region of the variable domain of T cell receptor (TR) alpha chain that participates in the antigen recognition. Alpha-beta T cell receptors are antigen specific receptors which are essential to the immune response and are present on the cell surface of T lymphocytes. Recognize peptide-major histocompatibility (MH) (pMH) complexes that are displayed by antigen presenting cells (APC), a prerequisite for efficient T cell adaptive immunity against pathogens. Binding of alpha-beta TR to pMH complex initiates TR-CD3 clustering on the cell surface and intracellular activation of LCK that phosphorylates the ITAM motifs of CD3G, CD3D, CD3E and CD247 enabling the recruitment of ZAP70. In turn ZAP70 phosphorylates LAT, which recruits numerous signaling molecules to form the LAT signalosome. The LAT signalosome propagates signal branching to three major signaling pathways, the calcium, the mitogen-activated protein kinase (MAPK) kinase and the nuclear factor NF-kappa-B (NF-kB) pathways, leading to the mobilization of transcription factors that are critical for gene expression and essential for T cell growth and differentiation. The T cell repertoire is generated in the thymus, by V-(D)-J rearrangement. This repertoire is then shaped by intrathymic selection events to generate a peripheral T cell pool of self-MH restricted, non-autoaggressive T cells. Post-thymic interaction of alpha-beta TR with the pMH complexes shapes TR structural and functional avidity. This chain is T cell receptor alpha variable 40, found in Homo sapiens (Human).